Here is a 210-residue protein sequence, read N- to C-terminus: Ion-translocating oxidoreductase complex subunit G (210 aa).

The chain crosses the membrane as a helical span at residues serine 9 to leucine 29. Threonine 176 carries the post-translational modification FMN phosphoryl threonine.

The protein belongs to the RnfG family. The complex is composed of six subunits: RnfA, RnfB, RnfC, RnfD, RnfE and RnfG. The cofactor is FMN.

It is found in the cell inner membrane. In terms of biological role, part of a membrane-bound complex that couples electron transfer with translocation of ions across the membrane. The sequence is that of Ion-translocating oxidoreductase complex subunit G from Aliivibrio fischeri (strain ATCC 700601 / ES114) (Vibrio fischeri).